The primary structure comprises 168 residues: 2-C-methyl-D-erythritol 2,4-cyclodiphosphate synthase (168 aa).

A divalent metal cation contacts are provided by aspartate 11 and histidine 13. 4-CDP-2-C-methyl-D-erythritol 2-phosphate is bound by residues 11–13 (DVH) and 41–42 (HS). An a divalent metal cation-binding site is contributed by histidine 49. Residues 63 to 65 (DIG), 68 to 72 (FPDTD), 139 to 142 (TTTE), phenylalanine 146, and arginine 149 each bind 4-CDP-2-C-methyl-D-erythritol 2-phosphate.

The protein belongs to the IspF family. As to quaternary structure, homotrimer. The cofactor is a divalent metal cation.

It carries out the reaction 4-CDP-2-C-methyl-D-erythritol 2-phosphate = 2-C-methyl-D-erythritol 2,4-cyclic diphosphate + CMP. It functions in the pathway isoprenoid biosynthesis; isopentenyl diphosphate biosynthesis via DXP pathway; isopentenyl diphosphate from 1-deoxy-D-xylulose 5-phosphate: step 4/6. In terms of biological role, involved in the biosynthesis of isopentenyl diphosphate (IPP) and dimethylallyl diphosphate (DMAPP), two major building blocks of isoprenoid compounds. Catalyzes the conversion of 4-diphosphocytidyl-2-C-methyl-D-erythritol 2-phosphate (CDP-ME2P) to 2-C-methyl-D-erythritol 2,4-cyclodiphosphate (ME-CPP) with a corresponding release of cytidine 5-monophosphate (CMP). The protein is 2-C-methyl-D-erythritol 2,4-cyclodiphosphate synthase of Psychrobacter cryohalolentis (strain ATCC BAA-1226 / DSM 17306 / VKM B-2378 / K5).